A 148-amino-acid chain; its full sequence is 3-dehydroquinate dehydratase (148 aa).

The active-site Proton acceptor is Y23. Substrate contacts are provided by N74, H80, and D87. H100 acts as the Proton donor in catalysis. Substrate contacts are provided by residues 101 to 102 (IS) and R111.

This sequence belongs to the type-II 3-dehydroquinase family. In terms of assembly, homododecamer.

It catalyses the reaction 3-dehydroquinate = 3-dehydroshikimate + H2O. It functions in the pathway metabolic intermediate biosynthesis; chorismate biosynthesis; chorismate from D-erythrose 4-phosphate and phosphoenolpyruvate: step 3/7. Catalyzes a trans-dehydration via an enolate intermediate. The sequence is that of 3-dehydroquinate dehydratase from Caldanaerobacter subterraneus subsp. tengcongensis (strain DSM 15242 / JCM 11007 / NBRC 100824 / MB4) (Thermoanaerobacter tengcongensis).